Reading from the N-terminus, the 224-residue chain is Probable septum site-determining protein MinC (224 aa).

This sequence belongs to the MinC family. In terms of assembly, interacts with MinD and FtsZ.

Cell division inhibitor that blocks the formation of polar Z ring septums. Rapidly oscillates between the poles of the cell to destabilize FtsZ filaments that have formed before they mature into polar Z rings. Prevents FtsZ polymerization. The protein is Probable septum site-determining protein MinC of Shewanella amazonensis (strain ATCC BAA-1098 / SB2B).